Consider the following 502-residue polypeptide: ATP synthase subunit alpha (502 aa).

The disordered stretch occupies residues 117 to 139; that stretch reads GMGPVLTSKTRPIESPAPGVMDR. 169-176 is an ATP binding site; sequence GDRQTGKT.

The protein belongs to the ATPase alpha/beta chains family. F-type ATPases have 2 components, CF(1) - the catalytic core - and CF(0) - the membrane proton channel. CF(1) has five subunits: alpha(3), beta(3), gamma(1), delta(1), epsilon(1). CF(0) has three main subunits: a(1), b(2) and c(9-12). The alpha and beta chains form an alternating ring which encloses part of the gamma chain. CF(1) is attached to CF(0) by a central stalk formed by the gamma and epsilon chains, while a peripheral stalk is formed by the delta and b chains.

It localises to the cell membrane. It catalyses the reaction ATP + H2O + 4 H(+)(in) = ADP + phosphate + 5 H(+)(out). In terms of biological role, produces ATP from ADP in the presence of a proton gradient across the membrane. The alpha chain is a regulatory subunit. This Bacillus licheniformis (strain ATCC 14580 / DSM 13 / JCM 2505 / CCUG 7422 / NBRC 12200 / NCIMB 9375 / NCTC 10341 / NRRL NRS-1264 / Gibson 46) protein is ATP synthase subunit alpha.